A 681-amino-acid chain; its full sequence is UvrABC system protein B (681 aa).

A Helicase ATP-binding domain is found at 32–419 (ARLSRGERDV…GGEYVEQVIR (388 aa)). Residue 45–52 (GATGTGKS) participates in ATP binding. The short motif at 98 to 121 (YYDYYQPEAYIAQTDTYIEKDSSI) is the Beta-hairpin element. Positions 436 to 602 (QIDDLIHEIK…PLRKKIADIL (167 aa)) constitute a Helicase C-terminal domain. Residues 607-616 (ESKAESTAPS) show a composition bias toward polar residues. Residues 607–626 (ESKAESTAPSSDAVVVSKTN) form a disordered region. The UVR domain occupies 636–671 (RSLIDDLTTQMGTAARELKFELAGRLRDEIAELKKE).

Belongs to the UvrB family. As to quaternary structure, forms a heterotetramer with UvrA during the search for lesions. Interacts with UvrC in an incision complex.

It localises to the cytoplasm. In terms of biological role, the UvrABC repair system catalyzes the recognition and processing of DNA lesions. A damage recognition complex composed of 2 UvrA and 2 UvrB subunits scans DNA for abnormalities. Upon binding of the UvrA(2)B(2) complex to a putative damaged site, the DNA wraps around one UvrB monomer. DNA wrap is dependent on ATP binding by UvrB and probably causes local melting of the DNA helix, facilitating insertion of UvrB beta-hairpin between the DNA strands. Then UvrB probes one DNA strand for the presence of a lesion. If a lesion is found the UvrA subunits dissociate and the UvrB-DNA preincision complex is formed. This complex is subsequently bound by UvrC and the second UvrB is released. If no lesion is found, the DNA wraps around the other UvrB subunit that will check the other stand for damage. The polypeptide is UvrABC system protein B (Corynebacterium diphtheriae (strain ATCC 700971 / NCTC 13129 / Biotype gravis)).